We begin with the raw amino-acid sequence, 41 residues long: Conotoxin Bu22 (41 aa).

Positions Ser1–Arg25 are excised as a propeptide. Disulfide bonds link Cys27–Cys33 and Cys28–Cys40.

Belongs to the conotoxin A superfamily. As to expression, expressed by the venom duct.

The protein localises to the secreted. In Conus bullatus (Bubble cone), this protein is Conotoxin Bu22.